The primary structure comprises 211 residues: MSLFDKTHLVAQADALPGRNTPMPVATLHAVNGHSMTNVPAGMEVALFAMGCFWGVERLFWQLPGVYSTAAGYTGGYTPNPTYREVCSGQTGHAEAVRVVYDPQVISYEQLLQVFWENHDPAQGMRQGNDHGTQYRSAIYPLTPEQTAAAKASLARFQAAMNDAHDTRHITTEIATAKPFYYAEDDHQQYLYKNPHGYCGIGGIGVCLPPQ.

Residue C52 is part of the active site.

The protein belongs to the MsrA Met sulfoxide reductase family.

It carries out the reaction L-methionyl-[protein] + [thioredoxin]-disulfide + H2O = L-methionyl-(S)-S-oxide-[protein] + [thioredoxin]-dithiol. The catalysed reaction is [thioredoxin]-disulfide + L-methionine + H2O = L-methionine (S)-S-oxide + [thioredoxin]-dithiol. Its function is as follows. Has an important function as a repair enzyme for proteins that have been inactivated by oxidation. Catalyzes the reversible oxidation-reduction of methionine sulfoxide in proteins to methionine. The sequence is that of Peptide methionine sulfoxide reductase MsrA from Klebsiella pneumoniae (strain 342).